The following is a 435-amino-acid chain: 5-methylthioadenosine/S-adenosylhomocysteine deaminase (435 aa).

His65 and His67 together coordinate Zn(2+). Positions 94, 150, and 189 each coordinate substrate. His216 provides a ligand contact to Zn(2+). Glu219 and Asp304 together coordinate substrate. Asp304 contributes to the Zn(2+) binding site.

The protein belongs to the metallo-dependent hydrolases superfamily. MTA/SAH deaminase family. Zn(2+) is required as a cofactor.

It carries out the reaction S-adenosyl-L-homocysteine + H2O + H(+) = S-inosyl-L-homocysteine + NH4(+). It catalyses the reaction S-methyl-5'-thioadenosine + H2O + H(+) = S-methyl-5'-thioinosine + NH4(+). Its function is as follows. Catalyzes the deamination of 5-methylthioadenosine and S-adenosyl-L-homocysteine into 5-methylthioinosine and S-inosyl-L-homocysteine, respectively. Is also able to deaminate adenosine. The chain is 5-methylthioadenosine/S-adenosylhomocysteine deaminase from Bacillus cereus (strain ATCC 10987 / NRS 248).